Consider the following 394-residue polypeptide: Elongation factor Tu, mitochondrial (394 aa).

The 195-residue stretch at 10–204 (KPHCNIGTIG…AVDNYIPQPE (195 aa)) folds into the tr-type G domain. The G1 stretch occupies residues 19–26 (GHVDHGKT). Residue 19–26 (GHVDHGKT) coordinates GTP. Residues 60–64 (GITIS) form a G2 region. A G3 region spans residues 81–84 (DCPG). GTP is bound by residues 81–85 (DCPGH) and 136–139 (NKVD). The tract at residues 136–139 (NKVD) is G4. The segment at 174 to 176 (SAL) is G5.

It belongs to the TRAFAC class translation factor GTPase superfamily. Classic translation factor GTPase family. EF-Tu/EF-1A subfamily.

It is found in the mitochondrion. This protein promotes the GTP-dependent binding of aminoacyl-tRNA to the A-site of ribosomes during protein biosynthesis. The polypeptide is Elongation factor Tu, mitochondrial (TUFA) (Reclinomonas americana).